The primary structure comprises 152 residues: Transcriptional regulator MraZ (152 aa).

SpoVT-AbrB domains lie at 5–52 (ASAI…PLHE) and 81–124 (AHEV…DEQA).

It belongs to the MraZ family. Forms oligomers.

It localises to the cytoplasm. Its subcellular location is the nucleoid. The protein is Transcriptional regulator MraZ of Shewanella sp. (strain MR-7).